The primary structure comprises 611 residues: Chaperone protein HtpG (611 aa).

Positions 1–326 (MSETLERHAF…TEDLPLNVSR (326 aa)) are a; substrate-binding. The tract at residues 327-536 (EMLQATPVLA…SGGPDLQMQR (210 aa)) is b. A c region spans residues 537-611 (LLRRAGRGFG…RVAAALAAQA (75 aa)).

This sequence belongs to the heat shock protein 90 family. Homodimer.

The protein resides in the cytoplasm. In terms of biological role, molecular chaperone. Has ATPase activity. This Methylobacterium sp. (strain 4-46) protein is Chaperone protein HtpG.